The following is a 272-amino-acid chain: Flagellin (272 aa).

This sequence belongs to the bacterial flagellin family.

The protein resides in the secreted. Its subcellular location is the bacterial flagellum. Functionally, flagellin is the subunit protein which polymerizes to form the filaments of bacterial flagella. This is Flagellin (hag) from Halalkalibacterium halodurans (strain ATCC BAA-125 / DSM 18197 / FERM 7344 / JCM 9153 / C-125) (Bacillus halodurans).